Reading from the N-terminus, the 269-residue chain is Phosphate import ATP-binding protein PstB (269 aa).

The 244-residue stretch at 21-264 (IEIKDFNFFY…PKDRRTENYI (244 aa)) folds into the ABC transporter domain. 55–62 (GPSGCGKT) serves as a coordination point for ATP.

This sequence belongs to the ABC transporter superfamily. Phosphate importer (TC 3.A.1.7) family. The complex is composed of two ATP-binding proteins (PstB), two transmembrane proteins (PstC and PstA) and a solute-binding protein (PstS).

Its subcellular location is the cell membrane. The catalysed reaction is phosphate(out) + ATP + H2O = ADP + 2 phosphate(in) + H(+). Functionally, part of the ABC transporter complex PstSACB involved in phosphate import. Responsible for energy coupling to the transport system. This chain is Phosphate import ATP-binding protein PstB, found in Mycoplasma capricolum subsp. capricolum (strain California kid / ATCC 27343 / NCTC 10154).